The sequence spans 2273 residues: Retinal-specific phospholipid-transporting ATPase ABCA4 (2273 aa).

The Cytoplasmic portion of the chain corresponds to 1–21; the sequence is MGFVRQIQLLLWKNWTLRKRQ. A helical membrane pass occupies residues 22 to 42; it reads KIRFVVELVWPLSLFLVLIWL. The Extracellular portion of the chain corresponds to 43–646; it reads RNANPLYSHH…MPYPCFVDDS (604 aa). Cystine bridges form between Cys-54-Cys-81 and Cys-75-Cys-324. Residue Asn-98 is glycosylated (N-linked (GlcNAc...) asparagine). Mg(2+)-binding residues include Ser-336 and Asn-338. A disulfide bond links Cys-370 and Cys-519. N-linked (GlcNAc...) asparagine glycosylation is found at Asn-415, Asn-444, and Asn-504. An N-all-trans-retinylidenephosphatidylethanolamine is bound by residues Arg-587 and Arg-653. Cystine bridges form between Cys-641–Cys-1490, Cys-1444–Cys-1455, and Cys-1488–Cys-1502. A helical transmembrane segment spans residues 647-667; it reads FMIILNRCFPIFMVLAWIYSV. The Cytoplasmic portion of the chain corresponds to 668–699; that stretch reads SMTVKSIVLEKELRLKETLKNQGVSNAVIWCT. The chain crosses the membrane as a helical span at residues 700–720; that stretch reads WFLDSFSIMSMSIFLLTIFIM. The Extracellular portion of the chain corresponds to 721–730; it reads HGRILHYSDP. The helical transmembrane segment at 731–751 threads the bilayer; sequence FILFLFLLAFSTATIMLCFLL. The Cytoplasmic segment spans residues 752–759; the sequence is STFFSKAS. A helical transmembrane segment spans residues 760-780; the sequence is LAAACSGVIYFTLYLPHILCF. Over 781–835 the chain is Extracellular; it reads AWQDRMTAELKKAVSLLSPVAFGFGTEYLVRFEEQGLGLQWSNIGNSPTEGDEFS. A helical membrane pass occupies residues 836–856; that stretch reads FLLSMQMMLLDAAVYGLLAWY. Residues 857-1376 lie on the Cytoplasmic side of the membrane; it reads LDQVFPGDYG…IRSHKDFLAQ (520 aa). Residues 891 to 911 form a disordered region; it reads ERALEKTEPLTEETEDPEHPE. Thr-901 bears the Phosphothreonine mark. The 232-residue stretch at 929–1160 folds into the ABC transporter 1 domain; it reads VCVKNLVKIF…FGTGLYLTLV (232 aa). Phe-938, Gly-966, and Lys-969 together coordinate ATP. Thr-970 is a Mg(2+) binding site. ATP is bound by residues Thr-971, Gln-1010, Lys-1054, Gly-1064, Gly-1065, and His-1118. Ser-1185 is modified (phosphoserine). Residues 1284 to 1345 form a disordered region; sequence PLFAGGAQQK…EPECPGPQLN (62 aa). Phosphothreonine is present on Thr-1313. The residue at position 1317 (Ser-1317) is a Phosphoserine. The span at 1331 to 1340 shows a compositional bias: pro residues; that stretch reads GQPPPEPECP. Residues 1377 to 1397 traverse the membrane as a helical segment; sequence IVLPATFVFLALMLSIVIPPF. Residues 1398-1727 are Extracellular-facing; the sequence is GEYPALTLHP…VSPTTYWVTN (330 aa). N-linked (GlcNAc...) asparagine glycosylation occurs at Asn-1469. Asn-1529, Asn-1588, and Asn-1662 each carry an N-linked (GlcNAc...) asparagine glycan. Residues 1728–1748 traverse the membrane as a helical segment; that stretch reads FLWDIMNYSVSAGLVVGIFIG. Residues 1749–1759 are Cytoplasmic-facing; that stretch reads FQKKAYTSPEN. Residues 1760 to 1780 traverse the membrane as a helical segment; sequence LPALVALLLLYGWAVIPMMYP. At 1781–1792 the chain is on the extracellular side; sequence ASFLFDVPSTAY. The chain crosses the membrane as a helical span at residues 1793–1813; it reads VALSCANLFIGINSSAITFIL. Topologically, residues 1814–1831 are cytoplasmic; the sequence is ELFENNRTLLRFNAVLRK. Residues 1832-1852 traverse the membrane as a helical segment; the sequence is LLIVFPHFCLGRGLIDLALSQ. Over 1853-1873 the chain is Extracellular; sequence AVTDVYARFGEEHSANPFHWD. A helical membrane pass occupies residues 1874-1894; sequence LIGKNLFAMVVEGVVYFLLTL. Residues 1895-2273 are Cytoplasmic-facing; sequence LVQRHFFLSQ…AAGASRQAQD (379 aa). The ABC transporter 2 domain occupies 1938 to 2170; the sequence is LRLHELTKIY…FGDGYIVTMK (233 aa). Positions 1974, 1975, 1978, 1979, 1980, and 2073 each coordinate ATP. Residue Thr-1979 coordinates Mg(2+). Residues 2244–2249 are essential for ATP binding and ATPase activity; the sequence is VFVNFA.

It belongs to the ABC transporter superfamily. ABCA family. Proteolytic cleavage by trypsin leads to a 120-kDa N-terminal fragment and a 115-kDa C-terminal fragment that are linked through disulfide bonds. Post-translationally, N-glycosylated. In terms of processing, phosphorylation is independent of light exposure and modulates ATPase activity. Retinal-specific. Seems to be exclusively found in the rims of rod photoreceptor cells.

Its subcellular location is the membrane. The protein localises to the endoplasmic reticulum. It localises to the cytoplasmic vesicle. The protein resides in the cell projection. It is found in the cilium. Its subcellular location is the photoreceptor outer segment. It carries out the reaction an N-all-trans-retinylidenephosphatidylethanolamine(out) + ATP + H2O = an N-all-trans-retinylidenephosphatidylethanolamine(in) + ADP + phosphate + H(+). The catalysed reaction is ATP + H2O + phospholipidSide 1 = ADP + phosphate + phospholipidSide 2.. It catalyses the reaction a 1,2-diacyl-sn-glycero-3-phosphoethanolamine(out) + ATP + H2O = a 1,2-diacyl-sn-glycero-3-phosphoethanolamine(in) + ADP + phosphate + H(+). The enzyme catalyses N-11-cis-retinylidenephosphatidylethanolamine(out) + ATP + H2O = N-11-cis-retinylidenephosphatidylethanolamine(in) + ADP + phosphate + H(+). It carries out the reaction ATP + H2O = ADP + phosphate + H(+). Its activity is regulated as follows. ATPase activity is decreased by cholesterol and ceramide. Phospholipids translocase activity is highly reduced by berylium fluoride and aluminum floride. N-ethylmaleimide inhibits phospholipid translocase activity. Functionally, flippase that catalyzes in an ATP-dependent manner the transport of retinal-phosphatidylethanolamine conjugates like 11-cis and all-trans isomers of N-retinylidene-phosphatidylethanolamine (N-Ret-PE) from the lumen to the cytoplasmic leaflet of photoreceptor outer segment disk membranes, where 11-cis-retinylidene-phosphatidylethanolamine is then isomerized to its all-trans isomer and reduced by RDH8 to produce all-trans-retinol. This transport activity ensures that all-trans-retinal generated from photoexcitation and 11-cis-retinal not needed for the regeneration of rhodopsin and cone opsins are effectively cleared from the photoreceptors, therefore preventing their accumulation and the formation of toxic bisretinoid. Displays ATPase activity in vitro in absence of retinal substrate. May display GTPase activity that is strongly influenced by the lipid environment and the presence of retinoid compounds. Binds the unprotonated form of N-retinylidene-phosphatidylethanolamine with high affinity in the absence of ATP, and ATP binding and hydrolysis induce a protein conformational change that causes N-retinylidene-phosphatidylethanolamine release. This Homo sapiens (Human) protein is Retinal-specific phospholipid-transporting ATPase ABCA4.